Reading from the N-terminus, the 90-residue chain is Phenol 2-monooxygenase, stimulatory component DmpM (90 aa).

The protein belongs to the TmoD/XamoD family. In terms of assembly, active as a monomer. Formation of dimers inactivates the protein. The multicomponent enzyme phenol hydroxylase is formed by DmpL (P1 component), DmpM (P2 component), DmpN (P3 component), DmpO (P4 component) and DmpP (P5 component).

It catalyses the reaction phenol + NADH + O2 + H(+) = catechol + NAD(+) + H2O. Its pathway is aromatic compound metabolism; phenol degradation. Part of a multicomponent enzyme which catalyzes the degradation of phenol and some of its methylated derivatives. DmpM is a regulatory subunit that stimulates the phenol hydroxylase activity of the complex. The steady-state rate of phenol hydroxylase turnover is dependent on the DmpM concentration, with a maximum observed rate at about 1.5 DmpM per oxygenase monomer. Higher concentrations of DmpM inhibit phenol hydroxylase activity. May act by altering the redox potential of the oxygenase. Required for growth on phenol and for in vitro phenol hydroxylase activity. The sequence is that of Phenol 2-monooxygenase, stimulatory component DmpM from Pseudomonas sp. (strain CF600).